The sequence spans 461 residues: MKISFIEPAILLYAFAMTLTIPLTAQYVYRRIWEETGNYTFTSSSNVSECEQNKSSSTFAFQEEVQKKASLFSLQVEISGLIPGLVSTFMLLSSSDNHGRKLPMVLSSLGSLGTNLWLCAMSYFDLPLQLLVASTFIGALFGNYTTFWGACFAYIVDQEKEYKHRIIRIAVLDFMLGVVTGLTGLSSGYFIRELGFAWSYFIIAVVVLVNLAYILFFLSDPIKESSSQIVTMSCSESLKDLFYRTYMLFKNGSCKRRSLLCLLIFTLVVYFFVVFGITPVFTLYELGPPLCWNEVYIGYGSALGSLSFLSSFLGIWLFSYCLKDIHIAYVGIFTTMVGMMLTAFTRTTLMMFLVRISFFFTIMPLSILRSMLSKVVHSTEQGVLFACIAFLETLGGVTSTSAYNGIYSATVAWYPGFVFLLSAGLLVLPAVSLCMVKCIGWEEGSYTLLIHDEPSEHTSDS.

The N-terminal stretch at 1-25 (MKISFIEPAILLYAFAMTLTIPLTA) is a signal peptide. Topologically, residues 26–70 (QYVYRRIWEETGNYTFTSSSNVSECEQNKSSSTFAFQEEVQKKAS) are extracellular. N-linked (GlcNAc...) asparagine glycans are attached at residues Asn38, Asn46, and Asn53. A helical membrane pass occupies residues 71–91 (LFSLQVEISGLIPGLVSTFML). Over 92–103 (LSSSDNHGRKLP) the chain is Cytoplasmic. The chain crosses the membrane as a helical span at residues 104-124 (MVLSSLGSLGTNLWLCAMSYF). Residues 125–135 (DLPLQLLVAST) lie on the Extracellular side of the membrane. The helical transmembrane segment at 136 to 156 (FIGALFGNYTTFWGACFAYIV) threads the bilayer. The Cytoplasmic portion of the chain corresponds to 157 to 170 (DQEKEYKHRIIRIA). Residues 171-191 (VLDFMLGVVTGLTGLSSGYFI) form a helical membrane-spanning segment. Over 192 to 197 (RELGFA) the chain is Extracellular. A helical membrane pass occupies residues 198–218 (WSYFIIAVVVLVNLAYILFFL). Topologically, residues 219 to 260 (SDPIKESSSQIVTMSCSESLKDLFYRTYMLFKNGSCKRRSLL) are cytoplasmic. A helical membrane pass occupies residues 261–281 (CLLIFTLVVYFFVVFGITPVF). Residues 282–301 (TLYELGPPLCWNEVYIGYGS) are Extracellular-facing. The chain crosses the membrane as a helical span at residues 302–322 (ALGSLSFLSSFLGIWLFSYCL). Topologically, residues 323–324 (KD) are cytoplasmic. The helical transmembrane segment at 325-345 (IHIAYVGIFTTMVGMMLTAFT) threads the bilayer. Residues 346–347 (RT) are Extracellular-facing. A helical transmembrane segment spans residues 348 to 368 (TLMMFLVRISFFFTIMPLSIL). Topologically, residues 369-381 (RSMLSKVVHSTEQ) are cytoplasmic. Residues 382–402 (GVLFACIAFLETLGGVTSTSA) traverse the membrane as a helical segment. At 403–415 (YNGIYSATVAWYP) the chain is on the extracellular side. A helical transmembrane segment spans residues 416–436 (GFVFLLSAGLLVLPAVSLCMV). Over 437–461 (KCIGWEEGSYTLLIHDEPSEHTSDS) the chain is Cytoplasmic. The short motif at 446-449 (YTLL) is the Tyrosine-based lysosomal-sorting motif element.

This sequence belongs to the major facilitator superfamily. SLC46A family.

Its subcellular location is the lysosome membrane. It catalyses the reaction estrone 3-sulfate(out) + n H(+)(out) = estrone 3-sulfate(in) + n H(+)(in). It carries out the reaction 25-hydroxyvitamin D3 sulfate(out) + n H(+)(out) = 25-hydroxyvitamin D3 sulfate(in) + n H(+)(in). The catalysed reaction is cholate(out) + n H(+)(out) = cholate(in) + n H(+)(in). The enzyme catalyses glycocholate(out) + n H(+)(out) = glycocholate(in) + n H(+)(in). It catalyses the reaction taurocholate(out) + n H(+)(out) = taurocholate(in) + n H(+)(in). It carries out the reaction dehydroepiandrosterone 3-sulfate(out) + n H(+)(out) = dehydroepiandrosterone 3-sulfate(in) + n H(+)(in). The catalysed reaction is N-acetyl-D-muramoyl-L-alanyl-D-isoglutamine(out) + n H(+)(out) = N-acetyl-D-muramoyl-L-alanyl-D-isoglutamine(in) + n H(+)(in). The enzyme catalyses 2',3'-cGAMP(out) + n H(+)(out) = 2',3'-cGAMP(in) + n H(+)(in). Lysosomal proton-coupled steroid conjugate and bile acid transporter. Preferentially recognizes lipophilic steroid conjugates or bile acis as endogenous substrates and seems to mediate escape from lysosomes to the cytoplasm. Modulates hepatic cytosolic copper homeostasis, maybe acting as a lysosomal copper transporter and sequestering copper ions in the lysosome. Delivers pathogen-associated molecular patterns to cytosolic pattern recognition receptors as part of the innate immune response to microbes. Selectively transports bacterial muramyl dipeptide (MDP) into the cytosol for recognition by NOD2, triggering inflammatory responses. Likely acts as a redundant importer of cyclic GMP-AMP dinucleotides (cGAMPs) in monocyte and macrophage cell lineages. The transport mechanism, its electrogenicity and stoichiometry remain to be elucidated. This chain is Lysosomal proton-coupled steroid conjugate and bile acid symporter SLC46A3 (Slc46a3), found in Rattus norvegicus (Rat).